The primary structure comprises 236 residues: Biosynthetic peptidoglycan transglycosylase (236 aa).

Residues 20–40 form a helical membrane-spanning segment; the sequence is LVFIVLSVLILPYALIGLYLL.

It belongs to the glycosyltransferase 51 family.

The protein resides in the cell inner membrane. It carries out the reaction [GlcNAc-(1-&gt;4)-Mur2Ac(oyl-L-Ala-gamma-D-Glu-L-Lys-D-Ala-D-Ala)](n)-di-trans,octa-cis-undecaprenyl diphosphate + beta-D-GlcNAc-(1-&gt;4)-Mur2Ac(oyl-L-Ala-gamma-D-Glu-L-Lys-D-Ala-D-Ala)-di-trans,octa-cis-undecaprenyl diphosphate = [GlcNAc-(1-&gt;4)-Mur2Ac(oyl-L-Ala-gamma-D-Glu-L-Lys-D-Ala-D-Ala)](n+1)-di-trans,octa-cis-undecaprenyl diphosphate + di-trans,octa-cis-undecaprenyl diphosphate + H(+). Its pathway is cell wall biogenesis; peptidoglycan biosynthesis. Peptidoglycan polymerase that catalyzes glycan chain elongation from lipid-linked precursors. This is Biosynthetic peptidoglycan transglycosylase from Rhizobium meliloti (strain 1021) (Ensifer meliloti).